The chain runs to 567 residues: 2-succinyl-5-enolpyruvyl-6-hydroxy-3-cyclohexene-1-carboxylate synthase (567 aa).

Belongs to the TPP enzyme family. MenD subfamily. In terms of assembly, homodimer. The cofactor is Mg(2+). Requires Mn(2+) as cofactor. Thiamine diphosphate serves as cofactor.

The catalysed reaction is isochorismate + 2-oxoglutarate + H(+) = 5-enolpyruvoyl-6-hydroxy-2-succinyl-cyclohex-3-ene-1-carboxylate + CO2. It participates in quinol/quinone metabolism; 1,4-dihydroxy-2-naphthoate biosynthesis; 1,4-dihydroxy-2-naphthoate from chorismate: step 2/7. Its pathway is quinol/quinone metabolism; menaquinone biosynthesis. Its function is as follows. Catalyzes the thiamine diphosphate-dependent decarboxylation of 2-oxoglutarate and the subsequent addition of the resulting succinic semialdehyde-thiamine pyrophosphate anion to isochorismate to yield 2-succinyl-5-enolpyruvyl-6-hydroxy-3-cyclohexene-1-carboxylate (SEPHCHC). This chain is 2-succinyl-5-enolpyruvyl-6-hydroxy-3-cyclohexene-1-carboxylate synthase, found in Yersinia pseudotuberculosis serotype I (strain IP32953).